The sequence spans 318 residues: Ferrochelatase (318 aa).

Residues H186 and E264 each coordinate Fe cation.

Belongs to the ferrochelatase family.

The protein localises to the cytoplasm. It carries out the reaction heme b + 2 H(+) = protoporphyrin IX + Fe(2+). The protein operates within porphyrin-containing compound metabolism; protoheme biosynthesis; protoheme from protoporphyrin-IX: step 1/1. Functionally, catalyzes the ferrous insertion into protoporphyrin IX. In Chlamydia caviae (strain ATCC VR-813 / DSM 19441 / 03DC25 / GPIC) (Chlamydophila caviae), this protein is Ferrochelatase.